The sequence spans 250 residues: 5-oxoprolinase subunit A (250 aa).

This sequence belongs to the LamB/PxpA family. As to quaternary structure, forms a complex composed of PxpA, PxpB and PxpC.

It carries out the reaction 5-oxo-L-proline + ATP + 2 H2O = L-glutamate + ADP + phosphate + H(+). Its function is as follows. Catalyzes the cleavage of 5-oxoproline to form L-glutamate coupled to the hydrolysis of ATP to ADP and inorganic phosphate. The chain is 5-oxoprolinase subunit A from Streptomyces coelicolor (strain ATCC BAA-471 / A3(2) / M145).